A 497-amino-acid chain; its full sequence is MORN repeat-containing protein 1 (497 aa).

The interval 1-27 (MAAAGEGTPSSRGPRRDPPRRPPRNGY) is disordered. MORN repeat units lie at residues 39–61 (YEGE…DGSY), 62–84 (YEGA…WSGD), 86–108 (FSGQ…AGGC), 109–131 (YEGE…DGQV), 132–154 (YQGS…NGDK), 155–177 (YDGD…DGST), and 178–200 (YKGQ…SGVT). 2 disordered regions span residues 393–425 (GGRS…ATEE) and 468–497 (QPPH…PAPR).

This chain is MORN repeat-containing protein 1 (MORN1), found in Homo sapiens (Human).